The sequence spans 391 residues: 4-hydroxy-3-methylbut-2-en-1-yl diphosphate synthase (flavodoxin) (391 aa).

Cysteine 281, cysteine 284, cysteine 316, and glutamate 323 together coordinate [4Fe-4S] cluster. Residues 372–391 form a disordered region; the sequence is EMGGEDGQGGIKGSPVVSVS.

This sequence belongs to the IspG family. [4Fe-4S] cluster serves as cofactor.

The catalysed reaction is (2E)-4-hydroxy-3-methylbut-2-enyl diphosphate + oxidized [flavodoxin] + H2O + 2 H(+) = 2-C-methyl-D-erythritol 2,4-cyclic diphosphate + reduced [flavodoxin]. The protein operates within isoprenoid biosynthesis; isopentenyl diphosphate biosynthesis via DXP pathway; isopentenyl diphosphate from 1-deoxy-D-xylulose 5-phosphate: step 5/6. Converts 2C-methyl-D-erythritol 2,4-cyclodiphosphate (ME-2,4cPP) into 1-hydroxy-2-methyl-2-(E)-butenyl 4-diphosphate. This is 4-hydroxy-3-methylbut-2-en-1-yl diphosphate synthase (flavodoxin) from Renibacterium salmoninarum (strain ATCC 33209 / DSM 20767 / JCM 11484 / NBRC 15589 / NCIMB 2235).